We begin with the raw amino-acid sequence, 276 residues long: Prohibitin 1 (276 aa).

It belongs to the prohibitin family.

Required for larval metabolism or for the progression of the larva into a pupa. The polypeptide is Prohibitin 1 (Drosophila melanogaster (Fruit fly)).